Here is a 271-residue protein sequence, read N- to C-terminus: MHELLLFASVPAHQHHELLQQLAGLTAMQPRHRLERRLVFKAYRKPGLTNTRVGASQDLQGVELQRLNKMLNGGMFYTQVVGPVAKADFGGNPSSSGDPDVSMSGLEEKPSSSSSSYSYEDQPWKLEFRDIPEAGTRSAVTARLMASATLPKGDITAPMNAWGYSFVTEYVVEGDVFVLNDIVIFLHRVLLYPTGAQESHGPRRQLPAYQELSPLERTGSYVLQAAITVQDGGNQEMMRTASQHLFGLREQLKSAVRLEMADRLSLDTRAK.

A disordered region spans residues 89-119; it reads FGGNPSSSGDPDVSMSGLEEKPSSSSSSYSY.

This sequence belongs to the Mediator complex subunit 18 family. As to quaternary structure, component of the Mediator complex.

The protein resides in the nucleus. Component of the Mediator complex, a coactivator involved in the regulated transcription of nearly all RNA polymerase II-dependent genes. Mediator functions as a bridge to convey information from gene-specific regulatory proteins to the basal RNA polymerase II transcription machinery. Mediator is recruited to promoters by direct interactions with regulatory proteins and serves as a scaffold for the assembly of a functional preinitiation complex with RNA polymerase II and the general transcription factors. The protein is Mediator of RNA polymerase II transcription subunit 18 (srb5) of Aspergillus niger (strain ATCC MYA-4892 / CBS 513.88 / FGSC A1513).